Consider the following 218-residue polypeptide: Superoxide dismutase [Mn] 1 (218 aa).

4 residues coordinate Mn(2+): histidine 43, histidine 98, aspartate 180, and histidine 184.

It belongs to the iron/manganese superoxide dismutase family. In terms of assembly, homodimer. Requires Mn(2+) as cofactor.

The catalysed reaction is 2 superoxide + 2 H(+) = H2O2 + O2. Functionally, destroys superoxide anion radicals which are normally produced within the cells and which are toxic to biological systems. In Bacillus cereus (strain ATCC 14579 / DSM 31 / CCUG 7414 / JCM 2152 / NBRC 15305 / NCIMB 9373 / NCTC 2599 / NRRL B-3711), this protein is Superoxide dismutase [Mn] 1 (sodA1).